Reading from the N-terminus, the 926-residue chain is MPGILPMKVIKVGNSSQSRIAQACDRCRSKKIRCDGIRPCCSQCANVGFECKTSDKLSRRAFPRGYTESLEERVRALEAEIRELKDLLDEKDEKLDMLSKMHSNRSRSAEPPRSTPAAEIKRDSGTPAKEDTFRVQASPLLLGVENSDSYFMGASSGRSFIETFKRKIQENGKSCTDFNPEAFLHIQGCYPLSTKLAPQSMRIPPRLFSDRCVNVYFQEWAPLFPVLHKPAFLRVYEEFVADPEKIKNNHKLTQLYLVFSIAGLSSEQPDFQQLAACETQWHKSLEAVLMDNTMLTLQCLILALMYCTVRADYKRLQYYKGIAVGLSHRLGLHQSQKRFSFGALTIETRKKVFWTLYTLDCFSAAILGLPKLLKDEDVHAEFPSDTDDENVTEKGFQPSLPGEPTRISSALALFRGSRILGKVLEKIYPAATSYELSLQQMSSLEGELTEWFENLPQHLKLNFKQDKPSTDVTGSRSPLLALAYYYTRILIYRPAIASSLGPKAAPALMSVAESSKSIVQIVQLLEERSMSFSFCLNKADILIVCGMALLYQTLGLKHDSKVLKDNEKLVNSVVKIVTKVNAPGSYDFKRIAGMLVTVEESLPQSLPTPPRQSPEACMPTPPAQQGSPSPSAVDRGAQPNLARQSSASLSETDLIVQRDKLLGMAVTPQHQQYQHQQLQQQHKNELSRARSQTSFDNLRQKAQQMRPHHRHSLSHAQVAQAALMGRTSTGTQSTPNLDYLSLSSPQSPVSPVQMRSQPHQLQQQQQQQPQPQQQQQQHQRSSIASSHSQQGQMFPQKTSTGMSTAEWEALVRSLDGGPVSLYTAIYGGPALAPLETPSSATQSSATAWGQDPWDMSSFNLGDFVPGAPTAQSVLSLSEESISSCDDVPSSDMGLNNGNMDYRNTLLPVTSAGTNNFLLDGLHGYGL.

The zn(2)-C6 fungal-type DNA-binding region spans 24 to 51 (CDRCRSKKIRCDGIRPCCSQCANVGFEC). 3 disordered regions span residues 100–129 (KMHSNRSRSAEPPRSTPAAEIKRDSGTPAK), 602–649 (LPQS…SASL), and 667–801 (TPQH…TSTG). Residues 119 to 129 (EIKRDSGTPAK) are compositionally biased toward basic and acidic residues. 2 stretches are compositionally biased toward low complexity: residues 623 to 632 (AQQGSPSPSA) and 669 to 681 (QHQQYQHQQLQQQ). 2 stretches are compositionally biased toward polar residues: residues 689 to 703 (ARSQTSFDNLRQKAQ) and 726 to 736 (RTSTGTQSTPN). Low complexity predominate over residues 740–792 (LSLSSPQSPVSPVQMRSQPHQLQQQQQQQPQPQQQQQQHQRSSIASSHSQQGQ).

It localises to the nucleus. Positive regulator of acetate induction. This Neurospora crassa (strain ATCC 24698 / 74-OR23-1A / CBS 708.71 / DSM 1257 / FGSC 987) protein is Transcriptional activator protein acu-15 (acu-15).